The primary structure comprises 718 residues: Zinc finger protein 39 (718 aa).

Residues 59–130 (VSFEDVSVDF…EDVPKQSRAD (72 aa)) form the KRAB domain. The C2H2-type 1 zinc-finger motif lies at 298–320 (FECSICKKTFCTKCELMKHKKIH). The C2H2-type 2; degenerate zinc finger occupies 353-375 (HRCKQCEKCFHQKNQQNVHERVP). 11 consecutive C2H2-type zinc fingers follow at residues 409–431 (YGCN…QKIH), 437–459 (YGCE…QRTH), 465–487 (YECK…HRTH), 493–515 (YECD…QKVH), 521–543 (YECE…QKTH), 549–571 (YECN…QGTH), 577–599 (YQCE…QRNH), 605–627 (YACE…QRSH), 633–655 (YSCE…QRTH), 661–683 (YECK…QVTH), and 689–711 (FECQ…QRIH).

In terms of tissue distribution, predominantly in the spermatocytes and spermatids of testes.

It is found in the nucleus. In terms of biological role, a putative DNA-binding regulatory protein associated with meiosis in spermatogenesis. The sequence is that of Zinc finger protein 39 (Zfp39) from Mus musculus (Mouse).